The sequence spans 586 residues: MCGILAVLGCSDDSQAKRVRILELSRRLKHRGPDWSGLHQHGDNYLAHQRLAIVDPASGDQPLFNEDKSIIVTVNGEIYNHEELRKQLPNHKFFTQCDCDVIAHLYEEHGENFVDMLDGIFSFVLLDTRDNSFIVARDAIGVTSLYIGWGLDGSVWIASELKGLNDECEHFEVFPPGHLYSSKEREFRRWYNPPWFNEAIIPSTPYDPLVLRNAFEKAVIKRLMTDVPFGVLLSGGLDSSLVASVTARYLAGTKAAKQWGAKLPSFCVGLKGAPDLKAGKEVADFLGTVHHEFEFTIQDGIDAIEDVIYHTETYDVTTIRAATPMFLMSRKIKSSGVKWVISGEGSDEIFGGYLYFHKAPNREEFHQETCRKIKALHRYDCLRANKSTYAWGLEARVPFLDKDFIKVAMDIDPEFKMIKHDEGRIEKWILRKAFDDEENPYLPKHILYRQKEQFSDGVGYGWIDGIKDHAAKHVTDRMMFNASHIFPFNTPNTKEAYYYRMIFERFFPQNSARLTVPGGPSVACSTEKAIEWDASWSNNLDPSGRAALGVHVSAYEHQINPVTKGVEPEKIIPKIGVSPLGVAIQT.

The active-site For GATase activity is the Cys-2. One can recognise a Glutamine amidotransferase type-2 domain in the interval 2–185 (CGILAVLGCS…PGHLYSSKER (184 aa)). L-glutamine-binding positions include 50–54 (RLAIV), 75–77 (NGE), and Asp-98. One can recognise an Asparagine synthetase domain in the interval 193–517 (PPWFNEAIIP…PQNSARLTVP (325 aa)). ATP contacts are provided by residues Leu-232, Val-268, and 342–343 (SG).

Root nodules.

It carries out the reaction L-aspartate + L-glutamine + ATP + H2O = L-asparagine + L-glutamate + AMP + diphosphate + H(+). It participates in amino-acid biosynthesis; L-asparagine biosynthesis; L-asparagine from L-aspartate (L-Gln route): step 1/1. This chain is Asparagine synthetase, nodule [glutamine-hydrolyzing] (AS1), found in Pisum sativum (Garden pea).